Here is a 152-residue protein sequence, read N- to C-terminus: Large ribosomal subunit protein uL24 (152 aa).

The segment at 128–152 is disordered; sequence VVEEKETSKTSEGGGKTIEETEGEK.

The protein belongs to the universal ribosomal protein uL24 family. In terms of assembly, part of the 50S ribosomal subunit.

Functionally, one of two assembly initiator proteins, it binds directly to the 5'-end of the 23S rRNA, where it nucleates assembly of the 50S subunit. Its function is as follows. Located at the polypeptide exit tunnel on the outside of the subunit. The polypeptide is Large ribosomal subunit protein uL24 (Staphylothermus marinus (strain ATCC 43588 / DSM 3639 / JCM 9404 / F1)).